We begin with the raw amino-acid sequence, 707 residues long: 65-kDa microtubule-associated protein 3 (707 aa).

5 coiled-coil regions span residues 49–84 (LEVYRRKVDQANRCRAQLRQAIADAEAQLAAICSAM), 157–179 (NLSMRKLEELHCQLQVLQKEKID), 269–289 (QQEYQHITCNIAASEHEITEA), 354–374 (IVDATMVLEHLEQHISKIKEE), and 464–486 (LEEYNILRQEREEEHRRQRDQKK). The interval 495–574 (QEALYGSKPS…PSRKQSMNPS (80 aa)) is disordered. Residues 500–512 (GSKPSPSKPLGGK) are compositionally biased toward low complexity. Phosphoserine occurs at positions 504 and 528.

It belongs to the MAP65/ASE1 family. As to quaternary structure, forms a dimer. Binds to microtubules (MT) during cell division. Bundles polymerized MT via the formation of 25-nm crossbridges with centrally located endocytic MT, and midline phragmoplast MT. In terms of tissue distribution, expressed in all tissues enriched in dividing cells, such as the root and shoot apical meristem, foliar primordia, and young leaves, and embryos.

It is found in the nucleus. The protein localises to the cytoplasm. It localises to the cytoskeleton. The protein resides in the phragmoplast. Its function is as follows. Microtubule-associated protein that plays a critical role in organizing the mitotic microtubule array during both early and late mitosis in all plant organs. Essential for the cytokinesis, especially in roots, by maintaining the integrity of the overlapped microtubules in the phragmoplast. Required during root morphogenesis. Needed for giant cell development during root knot nematode infection, where cytokinesis is initiated but not completed. This chain is 65-kDa microtubule-associated protein 3 (MAP65-3), found in Arabidopsis thaliana (Mouse-ear cress).